A 101-amino-acid polypeptide reads, in one-letter code: CRISPR-associated endoribonuclease Cas2 (101 aa).

Position 8 (Asp-8) interacts with Mg(2+).

Belongs to the CRISPR-associated endoribonuclease Cas2 protein family. In terms of assembly, homodimer, forms a heterotetramer with a Cas1 homodimer. Mg(2+) serves as cofactor.

Functionally, CRISPR (clustered regularly interspaced short palindromic repeat), is an adaptive immune system that provides protection against mobile genetic elements (viruses, transposable elements and conjugative plasmids). CRISPR clusters contain sequences complementary to antecedent mobile elements and target invading nucleic acids. CRISPR clusters are transcribed and processed into CRISPR RNA (crRNA). Functions as a ssRNA-specific endoribonuclease. Involved in the integration of spacer DNA into the CRISPR cassette. This is CRISPR-associated endoribonuclease Cas2 from Lacticaseibacillus rhamnosus (strain ATCC 53103 / LMG 18243 / GG) (Lactobacillus rhamnosus).